Reading from the N-terminus, the 119-residue chain is MIQKETNLKPIDKCGVWSVRAFHLYGGSFRNQSTISNFLKVSVKKTRANNWVPKKTKLKAIIVTLKKELKKIDGSYIKFRTNNVVLLKKRLTPKGKILMGPVSSNLRRKRFLTSFCGSI.

Belongs to the universal ribosomal protein uL14 family.

The protein localises to the mitochondrion. The polypeptide is Large ribosomal subunit protein uL14m (Tetrahymena pyriformis).